The chain runs to 872 residues: Alanine--tRNA ligase (872 aa).

His-567, His-571, Cys-669, and His-673 together coordinate Zn(2+).

It belongs to the class-II aminoacyl-tRNA synthetase family. Zn(2+) is required as a cofactor.

The protein localises to the cytoplasm. The catalysed reaction is tRNA(Ala) + L-alanine + ATP = L-alanyl-tRNA(Ala) + AMP + diphosphate. In terms of biological role, catalyzes the attachment of alanine to tRNA(Ala) in a two-step reaction: alanine is first activated by ATP to form Ala-AMP and then transferred to the acceptor end of tRNA(Ala). Also edits incorrectly charged Ser-tRNA(Ala) and Gly-tRNA(Ala) via its editing domain. This is Alanine--tRNA ligase from Streptococcus pyogenes serotype M4 (strain MGAS10750).